We begin with the raw amino-acid sequence, 243 residues long: Mannosyl-3-phosphoglycerate phosphatase (243 aa).

The active-site Nucleophile is D8. Residues D8, D10, S169, and D204 each contribute to the Mg(2+) site.

The protein belongs to the HAD-like hydrolase superfamily. MPGP family. Mg(2+) serves as cofactor.

The protein localises to the cytoplasm. It catalyses the reaction 2-O-(alpha-D-mannosyl)-3-phosphoglycerate + H2O = (2R)-2-O-(alpha-D-mannosyl)-glycerate + phosphate. The protein operates within carbohydrate biosynthesis; 2-(alpha-D-mannosyl)-D-glycerate biosynthesis; 2-(alpha-D-mannosyl)-D-glycerate from GDP-alpha-D-mannose (MPG route): step 2/2. In terms of biological role, hydrolyzes mannosyl-3-phosphoglycerate (MPG) to form the osmolyte mannosylglycerate (MG). The enzyme is absolutely specific for MPG. This is Mannosyl-3-phosphoglycerate phosphatase from Pyrococcus horikoshii (strain ATCC 700860 / DSM 12428 / JCM 9974 / NBRC 100139 / OT-3).